A 259-amino-acid polypeptide reads, in one-letter code: 3-deoxy-manno-octulosonate cytidylyltransferase (259 aa).

Belongs to the KdsB family.

It is found in the cytoplasm. The enzyme catalyses 3-deoxy-alpha-D-manno-oct-2-ulosonate + CTP = CMP-3-deoxy-beta-D-manno-octulosonate + diphosphate. It functions in the pathway nucleotide-sugar biosynthesis; CMP-3-deoxy-D-manno-octulosonate biosynthesis; CMP-3-deoxy-D-manno-octulosonate from 3-deoxy-D-manno-octulosonate and CTP: step 1/1. The protein operates within bacterial outer membrane biogenesis; lipopolysaccharide biosynthesis. Its function is as follows. Activates KDO (a required 8-carbon sugar) for incorporation into bacterial lipopolysaccharide in Gram-negative bacteria. The sequence is that of 3-deoxy-manno-octulosonate cytidylyltransferase from Xanthomonas axonopodis pv. citri (strain 306).